We begin with the raw amino-acid sequence, 392 residues long: Chaperone protein DnaJ (392 aa).

The region spanning 2-67 (DYYTILGVAK…QKRESYDRYG (66 aa)) is the J domain. The segment at 149-227 (GVEKELLVSG…CRGQGRIKDK (79 aa)) adopts a CR-type zinc-finger fold. Residues Cys162, Cys165, Cys179, Cys182, Cys201, Cys204, Cys215, and Cys218 each coordinate Zn(2+). 4 CXXCXGXG motif repeats span residues 162–169 (CDACSGSG), 179–186 (CDRCKGSG), 201–208 (CPDCSGEG), and 215–222 (CSVCRGQG).

Belongs to the DnaJ family. In terms of assembly, homodimer. It depends on Zn(2+) as a cofactor.

It is found in the cytoplasm. In terms of biological role, participates actively in the response to hyperosmotic and heat shock by preventing the aggregation of stress-denatured proteins and by disaggregating proteins, also in an autonomous, DnaK-independent fashion. Unfolded proteins bind initially to DnaJ; upon interaction with the DnaJ-bound protein, DnaK hydrolyzes its bound ATP, resulting in the formation of a stable complex. GrpE releases ADP from DnaK; ATP binding to DnaK triggers the release of the substrate protein, thus completing the reaction cycle. Several rounds of ATP-dependent interactions between DnaJ, DnaK and GrpE are required for fully efficient folding. Also involved, together with DnaK and GrpE, in the DNA replication of plasmids through activation of initiation proteins. This chain is Chaperone protein DnaJ, found in Chlamydia trachomatis serovar L2 (strain ATCC VR-902B / DSM 19102 / 434/Bu).